Here is a 129-residue protein sequence, read N- to C-terminus: Large ribosomal subunit protein uL22 (129 aa).

The protein belongs to the universal ribosomal protein uL22 family. As to quaternary structure, part of the 50S ribosomal subunit.

Functionally, this protein binds specifically to 23S rRNA; its binding is stimulated by other ribosomal proteins, e.g. L4, L17, and L20. It is important during the early stages of 50S assembly. It makes multiple contacts with different domains of the 23S rRNA in the assembled 50S subunit and ribosome. Its function is as follows. The globular domain of the protein is located near the polypeptide exit tunnel on the outside of the subunit, while an extended beta-hairpin is found that lines the wall of the exit tunnel in the center of the 70S ribosome. The chain is Large ribosomal subunit protein uL22 from Rhizobium etli (strain ATCC 51251 / DSM 11541 / JCM 21823 / NBRC 15573 / CFN 42).